The following is a 1368-amino-acid chain: DNA-directed RNA polymerase subunit beta (1368 aa).

This sequence belongs to the RNA polymerase beta chain family. As to quaternary structure, the RNAP catalytic core consists of 2 alpha, 1 beta, 1 beta' and 1 omega subunit. When a sigma factor is associated with the core the holoenzyme is formed, which can initiate transcription.

The catalysed reaction is RNA(n) + a ribonucleoside 5'-triphosphate = RNA(n+1) + diphosphate. In terms of biological role, DNA-dependent RNA polymerase catalyzes the transcription of DNA into RNA using the four ribonucleoside triphosphates as substrates. The protein is DNA-directed RNA polymerase subunit beta of Legionella pneumophila (strain Paris).